Consider the following 338-residue polypeptide: GTPase Obg (338 aa).

Residues 1–159 (MSFIDEVKIN…RWIRMELKLM (159 aa)) form the Obg domain. The tract at residues 58 to 79 (DLRQHPHQKAGRGKNGMGSDRH) is disordered. Residues 160-331 (ADVGLLGMPS…LLDDIAFNLW (172 aa)) enclose the OBG-type G domain. GTP-binding positions include 166–173 (GMPSVGKS), 191–195 (FTTLK), 213–216 (DIPG), 283–286 (NKID), and 312–314 (SAA). Mg(2+) contacts are provided by Ser173 and Thr193.

Belongs to the TRAFAC class OBG-HflX-like GTPase superfamily. OBG GTPase family. In terms of assembly, monomer. It depends on Mg(2+) as a cofactor.

The protein localises to the cytoplasm. Functionally, an essential GTPase which binds GTP, GDP and possibly (p)ppGpp with moderate affinity, with high nucleotide exchange rates and a fairly low GTP hydrolysis rate. Plays a role in control of the cell cycle, stress response, ribosome biogenesis and in those bacteria that undergo differentiation, in morphogenesis control. In Citrifermentans bemidjiense (strain ATCC BAA-1014 / DSM 16622 / JCM 12645 / Bem) (Geobacter bemidjiensis), this protein is GTPase Obg.